The chain runs to 115 residues: MAEQVTSAKATAKTVRIPARKARLVIDLIRGKSVAEAFGILKFTPRSGAYLIEKVLKSAVANAENNFDLDVEDLYVSEAFVNEGPTLKRFRPRAKGSASPINKRTSHITVVVSVK.

The protein belongs to the universal ribosomal protein uL22 family. In terms of assembly, part of the 50S ribosomal subunit.

In terms of biological role, this protein binds specifically to 23S rRNA; its binding is stimulated by other ribosomal proteins, e.g. L4, L17, and L20. It is important during the early stages of 50S assembly. It makes multiple contacts with different domains of the 23S rRNA in the assembled 50S subunit and ribosome. Functionally, the globular domain of the protein is located near the polypeptide exit tunnel on the outside of the subunit, while an extended beta-hairpin is found that lines the wall of the exit tunnel in the center of the 70S ribosome. This Ligilactobacillus salivarius (strain UCC118) (Lactobacillus salivarius) protein is Large ribosomal subunit protein uL22.